Consider the following 192-residue polypeptide: uncharacterized protein (192 aa).

The protein to R.meliloti RA0936 and y4nF.

This is an uncharacterized protein from Sinorhizobium fredii (strain NBRC 101917 / NGR234).